The following is a 38-amino-acid chain: Large ribosomal subunit protein bL36 (38 aa).

The protein belongs to the bacterial ribosomal protein bL36 family.

This Phytoplasma australiense protein is Large ribosomal subunit protein bL36.